Reading from the N-terminus, the 337-residue chain is Putative long-chain-alcohol O-fatty-acyltransferase 10 (337 aa).

The next 8 membrane-spanning stretches (helical) occupy residues 7–27, 38–58, 59–79, 82–102, 142–162, 228–248, 254–274, and 285–305; these read SFVKVWGSAIISVSYCYYIPS, SVLPVCVLFLVLPLFFVFTIF, SSTTAFCLSILANFKLILFAF, GPLLPLPTNLFRFICFTCLPI, ILLLGLYPLHLYIVLDVLLTI, MGCMTTFFVSGLIHELVYFYI, TLEVTWFFVLHGVCTAMEIAV, and MLLRLITVGFLVVTGDLLFFG.

It belongs to the wax synthase family.

Its subcellular location is the membrane. It catalyses the reaction a long chain fatty alcohol + a fatty acyl-CoA = a wax ester + CoA. Functionally, catalyzes the final step in the synthesis of long-chain linear esters (waxes). The polypeptide is Putative long-chain-alcohol O-fatty-acyltransferase 10 (Arabidopsis thaliana (Mouse-ear cress)).